A 155-amino-acid chain; its full sequence is Endoribonuclease YbeY (155 aa).

Residues H115, H119, and H125 each contribute to the Zn(2+) site.

The protein belongs to the endoribonuclease YbeY family. Requires Zn(2+) as cofactor.

The protein localises to the cytoplasm. In terms of biological role, single strand-specific metallo-endoribonuclease involved in late-stage 70S ribosome quality control and in maturation of the 3' terminus of the 16S rRNA. The protein is Endoribonuclease YbeY of Polynucleobacter asymbioticus (strain DSM 18221 / CIP 109841 / QLW-P1DMWA-1) (Polynucleobacter necessarius subsp. asymbioticus).